The following is a 713-amino-acid chain: MMGSSSQELQTALTDISKTCHHMWEDSKDLQGRFVNDLAELQRLQCTITNFERAQHPEQAFQAKQAMTEMQKKATGVYEMLAQRRNEIISKLNDGANIASMMQGQLINDKLFTWKNAQKLAQIGMPFDDREQLLDEIQLEFEFLADNIWQLNMFACWMCDLCRRAPQLNDGLAQSSAAKLTTISEQLNRLLFVLVSQSFIVSVQPEPVLKTQHKFVTEVRLLIGDKLGIRQQLMNTNVSVKIIAEDEARVMSVDCDAQKEIRANKQVGSISNDFEKLTMDERGHLSAKFNNSKLTRIAHRKPPPKGASDMKCAANMQAATDQKYALLFFITPFQMGNLSKEEQLDVWTLSLPIMVTVHGSQDCDAQVAILWHRAFASISRDPNVHDVTAVSWENLAIMLRNKFSLFTGARRPLSESDLAYLSEKIIIPNMPDQKPITFTRFAKQAMREELAFSFWEWFFSIMQLIKQKLLKYWDEGWCIGFISKHDASQSMCMLPNTSFLLRFSDTQTGAVSIGFVCQDDDGQKVPFHLSPLTIKDLDQLSLASRIASCPQLKDIRYMYPNIDKEEMLRYFESEERHRVGGPESPGGYIQSEIVMVAKTNGNFRRASAAPSMFGADSPSPLSIQSKLDWSPGEIHQSMMEMTDELGHVLNVGGMDSMHPDANTLLGPAFKNPTFHPHDQQQHLQFVDMSHPQMMQQQHHGHNHNHTHNQFYPS.

Residues Trp477 to Glu574 form the SH2 domain.

The protein belongs to the transcription factor STAT family. As to quaternary structure, forms a homodimer or a heterodimer with a related family member.

The protein resides in the cytoplasm. It is found in the nucleus. Carries out a dual function: signal transduction and activation of transcription. Activated STAT proteins play a role in repression of dauer formation. Neuronal expression is held in check by negative signals through the TGF-beta pathway that target the daf-3 transcription factor. The chain is Signal transducer and activator of transcription 1 from Caenorhabditis briggsae.